A 555-amino-acid chain; its full sequence is Glutamine--tRNA ligase (555 aa).

Positions 34 to 44 (PEPNGYLHIGH) match the 'HIGH' region motif. Residues 35–37 (EPN) and 41–47 (HIGHAKS) each bind ATP. Residues D67 and Y212 each coordinate L-glutamine. ATP is bound by residues T231, 261–262 (RL), and 269–271 (MSK). Positions 268–272 (VMSKR) match the 'KMSKS' region motif. The interaction with tRNA stretch occupies residues 317 to 324 (TKQDNTIE).

It belongs to the class-I aminoacyl-tRNA synthetase family. Monomer.

Its subcellular location is the cytoplasm. The enzyme catalyses tRNA(Gln) + L-glutamine + ATP = L-glutaminyl-tRNA(Gln) + AMP + diphosphate. The sequence is that of Glutamine--tRNA ligase from Salmonella choleraesuis (strain SC-B67).